We begin with the raw amino-acid sequence, 194 residues long: Ribonuclease HII (194 aa).

Residues 1-194 (MTVGVDEVGR…RLFPRDDGLR (194 aa)) enclose the RNase H type-2 domain. Residues Asp6, Glu7, and Asp102 each coordinate a divalent metal cation.

It belongs to the RNase HII family. Requires Mn(2+) as cofactor. It depends on Mg(2+) as a cofactor.

The protein localises to the cytoplasm. It catalyses the reaction Endonucleolytic cleavage to 5'-phosphomonoester.. Its function is as follows. Endonuclease that specifically degrades the RNA of RNA-DNA hybrids. The sequence is that of Ribonuclease HII from Synechococcus sp. (strain WH7803).